Here is a 315-residue protein sequence, read N- to C-terminus: Small ribosomal subunit protein uS2 (315 aa).

The disordered stretch occupies residues 250–315 (LLEQGDAAKA…TESEKAPVSE (66 aa)). Basic and acidic residues-rich tracts occupy residues 272 to 282 (VSAKNEAKSED) and 297 to 315 (TEAK…PVSE).

Belongs to the universal ribosomal protein uS2 family.

In Clavibacter michiganensis subsp. michiganensis (strain NCPPB 382), this protein is Small ribosomal subunit protein uS2.